Here is a 916-residue protein sequence, read N- to C-terminus: Chitin synthase B (916 aa).

2 disordered regions span residues 1-75 (MAYH…GYSL) and 118-141 (ARSE…GGNG). The span at 14-26 (HTYDDGHQLRDLS) shows a compositional bias: basic and acidic residues. Polar residues predominate over residues 59–75 (RGLTASPVQRPTSGYSL). The next 7 helical transmembrane spans lie at 544 to 561 (RWLN…MHFG), 588 to 608 (FLTW…MDLV), 629 to 649 (IINT…FILA), 664 to 684 (SFVA…YLVV), 716 to 736 (IIII…FMYL), 845 to 865 (LVTL…SEGL), and 884 to 904 (ALLW…TWFL).

This sequence belongs to the chitin synthase family. Class III subfamily. As to quaternary structure, interacts with kibesin kinA. In terms of processing, activity requires trypsin activation, suggesting a zymogenic nature. Phosphorylated at yet unidentified residues in a N-terminal disordered region-dependent manner.

Its subcellular location is the cell membrane. It localises to the cell tip. The protein localises to the cell septum. It carries out the reaction [(1-&gt;4)-N-acetyl-beta-D-glucosaminyl](n) + UDP-N-acetyl-alpha-D-glucosamine = [(1-&gt;4)-N-acetyl-beta-D-glucosaminyl](n+1) + UDP + H(+). Activity is stimulated by Mg(2+) and is inhibited by polyoxin D. In terms of biological role, polymerizes chitin, a structural polymer of the cell wall and septum, by transferring the sugar moiety of UDP-GlcNAc to the non-reducing end of the growing chitin polymer. Does not substantially contribute to the rigidity of the cell wall but is necessary for normal hyphal growth and organization. In addition to its functions in the formation of normal cell walls of hyphae, is also involved in conidiophore and conidia development. This is Chitin synthase B from Emericella nidulans (strain FGSC A4 / ATCC 38163 / CBS 112.46 / NRRL 194 / M139) (Aspergillus nidulans).